We begin with the raw amino-acid sequence, 277 residues long: Undecaprenyl-diphosphatase (277 aa).

6 consecutive transmembrane segments (helical) span residues 88-108 (MGWL…LFQD), 117-137 (MWIV…ADAV), 157-179 (FAQA…AGLL), 191-211 (SFLL…YKVV), 227-247 (LATV…LKFV), and 255-275 (FVWY…FGVI).

This sequence belongs to the UppP family.

The protein resides in the cell membrane. It carries out the reaction di-trans,octa-cis-undecaprenyl diphosphate + H2O = di-trans,octa-cis-undecaprenyl phosphate + phosphate + H(+). Catalyzes the dephosphorylation of undecaprenyl diphosphate (UPP). Confers resistance to bacitracin. The chain is Undecaprenyl-diphosphatase from Pseudarthrobacter chlorophenolicus (strain ATCC 700700 / DSM 12829 / CIP 107037 / JCM 12360 / KCTC 9906 / NCIMB 13794 / A6) (Arthrobacter chlorophenolicus).